A 181-amino-acid chain; its full sequence is MKQQGVTIWLTGLSGAGKTTITHALEQKLREAGYALEVLDGDIVRTNLTKGLGFSKEDRDTNIRRIGFVANLLTRNGVIVLVSAISPYRDIRDEVRGTIGNFVEVFVNAPLNVCEERDVKGLYKKARAGEIKSFTGIDDPYEPPLNPEIECRTDLETLEESVTKIWQKLEELGYLAKPVAI.

12–19 contributes to the ATP binding site; sequence GLSGAGKT. Serine 86 serves as the catalytic Phosphoserine intermediate.

Belongs to the APS kinase family.

It catalyses the reaction adenosine 5'-phosphosulfate + ATP = 3'-phosphoadenylyl sulfate + ADP + H(+). It functions in the pathway sulfur metabolism; hydrogen sulfide biosynthesis; sulfite from sulfate: step 2/3. Catalyzes the synthesis of activated sulfate. This chain is Adenylyl-sulfate kinase, found in Rippkaea orientalis (strain PCC 8801 / RF-1) (Cyanothece sp. (strain PCC 8801)).